The following is a 124-amino-acid chain: Small ribosomal subunit protein bS6 (124 aa).

The interval 96–124 is disordered; sequence ETAPSPMMKEVQREEARKAAQTTTEGQAA. Residues 115 to 124 are compositionally biased toward polar residues; that stretch reads AQTTTEGQAA.

This sequence belongs to the bacterial ribosomal protein bS6 family.

In terms of biological role, binds together with bS18 to 16S ribosomal RNA. The protein is Small ribosomal subunit protein bS6 of Cupriavidus pinatubonensis (strain JMP 134 / LMG 1197) (Cupriavidus necator (strain JMP 134)).